The sequence spans 145 residues: Deoxyuridine 5'-triphosphate nucleotidohydrolase (145 aa).

Residues 63-65, glutamine 76, and 80-82 contribute to the substrate site; these read RSG and TVD.

The protein belongs to the dUTPase family. It depends on Mg(2+) as a cofactor.

It catalyses the reaction dUTP + H2O = dUMP + diphosphate + H(+). It functions in the pathway pyrimidine metabolism; dUMP biosynthesis; dUMP from dCTP (dUTP route): step 2/2. Functionally, this enzyme is involved in nucleotide metabolism: it produces dUMP, the immediate precursor of thymidine nucleotides and it decreases the intracellular concentration of dUTP so that uracil cannot be incorporated into DNA. In Chlamydia trachomatis serovar L2 (strain ATCC VR-902B / DSM 19102 / 434/Bu), this protein is Deoxyuridine 5'-triphosphate nucleotidohydrolase.